Consider the following 561-residue polypeptide: MKETVSELLQSALATLQSDGTLPADQSFTPQVGNTKDKSHGDYACNIALVASKAAGCPPRKLAEALVAALPENSAVEKVEIAGPGFINFFMSTASAFGIVNTILDEAQQFGRNNSGNGERVQVEFVSANPTGPLHVGHGRGAAIGDCLCRLLEANGYDVTREFYYNDAGAQINNLALSVQSRVKGLTPEDESWPEDGYRGDYIVDVANAYLAGETVVADDREVTAKADPEDRDAIREFAVAYLRREQDLDLKAFGVQFDVYFLESSLYEDGKVEATVERLKANGYTYEQDGAMWLKTTEFGDDKDRVMRKKDGGYTYFLPDVAYHLDKWQRGFTTVINEQGADHHSTVTRVRAGLQALKADIPQGWPDYVLHQMVMVTRSGQEVKISKRAGSYVTVRDLIDEVGRDATRFFLAARRVDSQLTFDIDLARSQTNENPVYYIQYAHARICSVLRKLAAEGVQRGMNECVGELSLLTLDEEKELANQLAKYPELIANSAAQREPHHLTHYLRELAGQFHTYYNAHKVLIEDTALRDARVSLYLAVRQVIANGLDLLGVSAPEEM.

Positions 128–138 (ANPTGPLHVGH) match the 'HIGH' region motif.

Belongs to the class-I aminoacyl-tRNA synthetase family. Monomer.

Its subcellular location is the cytoplasm. The catalysed reaction is tRNA(Arg) + L-arginine + ATP = L-arginyl-tRNA(Arg) + AMP + diphosphate. The sequence is that of Arginine--tRNA ligase from Marinobacter nauticus (strain ATCC 700491 / DSM 11845 / VT8) (Marinobacter aquaeolei).